Here is a 61-residue protein sequence, read N- to C-terminus: Large ribosomal subunit protein uL30 (61 aa).

It belongs to the universal ribosomal protein uL30 family. Part of the 50S ribosomal subunit.

The sequence is that of Large ribosomal subunit protein uL30 from Teredinibacter turnerae (strain ATCC 39867 / T7901).